Reading from the N-terminus, the 187-residue chain is GTP cyclohydrolase 1 (187 aa).

C76, H79, and C148 together coordinate Zn(2+).

Belongs to the GTP cyclohydrolase I family. As to quaternary structure, homomer.

It carries out the reaction GTP + H2O = 7,8-dihydroneopterin 3'-triphosphate + formate + H(+). It participates in cofactor biosynthesis; 7,8-dihydroneopterin triphosphate biosynthesis; 7,8-dihydroneopterin triphosphate from GTP: step 1/1. The sequence is that of GTP cyclohydrolase 1 from Desulforamulus reducens (strain ATCC BAA-1160 / DSM 100696 / MI-1) (Desulfotomaculum reducens).